The primary structure comprises 221 residues: Esterase C25G4.2 (221 aa).

Catalysis depends on charge relay system residues serine 106, aspartate 166, and histidine 194.

This sequence belongs to the LovG family.

In Caenorhabditis elegans, this protein is Esterase C25G4.2.